We begin with the raw amino-acid sequence, 351 residues long: Nuclear inhibitor of protein phosphatase 1 (351 aa).

The tract at residues 1–142 (MAAAVNSGSS…LPSAVKGDEK (142 aa)) is interaction with CDC5L, SF3B1 and MELK. In terms of domain architecture, FHA spans 49–101 (YLFGRNPDLCDFTIDHQSCSRVHAALVYHKHLKRVFLIDLNSTHGTFLGHIRL). The segment at 143–224 (MGGEDDELKG…VDPSVGRFRN (82 aa)) is interaction with EED. Phosphothreonine is present on T161. Phosphoserine is present on residues S178 and S199. Short sequence motifs (nuclear localization signal) lie at residues 185 to 209 (GNLD…DDEI) and 210 to 240 (INPE…RMEG). Residues 191 to 200 (RPKRKRKNSR) are involved in PP-1 inhibition. The involved in PP-1 binding stretch occupies residues 200 to 203 (RVTF). Residue S204 is modified to Phosphoserine. The residue at position 249 (S249) is a Phosphoserine. Y264 is modified (phosphotyrosine). The tract at residues 310 to 329 (AVAINPTPNPAVYNPEAVNE) is interaction with EED. Residues 314-351 (NPTPNPAVYNPEAVNEPKKKKYAKEAWPGKKPTPSLLI) are disordered. Residues 330-351 (PKKKKYAKEAWPGKKPTPSLLI) are RNA-binding. Residues 331–337 (KKKKYAK) are involved in PP-1 inhibition. Y335 is modified (phosphotyrosine).

As to quaternary structure, interacts with phosphorylated CDC5L, SF3B1 and MELK. Part of the spliceosome. Interacts with PPP1CA, PPP1CB and PPP1CC. Interacts with EED. Part of a complex consisting of PPP1R8, EED, HDAC2 and PP-1. May be inactivated by phosphorylation on Ser-199 or Ser-204.

It is found in the nucleus. It localises to the nucleus speckle. In terms of biological role, inhibitor subunit of the major nuclear protein phosphatase-1 (PP-1). It has RNA-binding activity but does not cleave RNA and may target PP-1 to RNA-associated substrates. May also be involved in pre-mRNA splicing. Binds DNA and might act as a transcriptional repressor. Essential for cell proliferation and early embryonic development. The protein is Nuclear inhibitor of protein phosphatase 1 (Ppp1r8) of Mus musculus (Mouse).